We begin with the raw amino-acid sequence, 246 residues long: 1-(5-phosphoribosyl)-5-[(5-phosphoribosylamino)methylideneamino] imidazole-4-carboxamide isomerase (246 aa).

Asp-8 (proton acceptor) is an active-site residue. The active-site Proton donor is Asp-129.

It belongs to the HisA/HisF family.

The protein resides in the cytoplasm. The enzyme catalyses 1-(5-phospho-beta-D-ribosyl)-5-[(5-phospho-beta-D-ribosylamino)methylideneamino]imidazole-4-carboxamide = 5-[(5-phospho-1-deoxy-D-ribulos-1-ylimino)methylamino]-1-(5-phospho-beta-D-ribosyl)imidazole-4-carboxamide. It participates in amino-acid biosynthesis; L-histidine biosynthesis; L-histidine from 5-phospho-alpha-D-ribose 1-diphosphate: step 4/9. In Nitrobacter hamburgensis (strain DSM 10229 / NCIMB 13809 / X14), this protein is 1-(5-phosphoribosyl)-5-[(5-phosphoribosylamino)methylideneamino] imidazole-4-carboxamide isomerase.